The chain runs to 333 residues: Minor fimbrium tip subunit MfA4 (333 aa).

An N-terminal signal peptide occupies residues 1 to 18 (MKKYLLYASLLTSVLLFS). Residue Cys-19 is the site of N-palmitoyl cysteine attachment. The S-diacylglycerol cysteine moiety is linked to residue Cys-19. The propeptide occupies 19–53 (CSKNNPSEPVEDRSIEISIRVDDFTKTGETVRYER).

This sequence belongs to the bacteroidetes fimbrillin superfamily. FimA/Mfa1 family. As to quaternary structure, component of the fimbrium tip. Minor fimbriae are composed of a structural subunit, most often Mfa1, and the accessory subunits Mfa3, Mfa4 and Mfa5. Mfa4 is required for Mfa3 and Mfa5 insertion into the fimbrium. Fimbrium assembly occurs by linear, head-to-tail oligomerization of fimbrial subunits. This is mediated via insertion of a C-terminal beta-strand from one subunit into a groove in the N-terminal domain of the following subunit.

It localises to the fimbrium. The protein resides in the cell outer membrane. Tip subunit of the minor fimbriae. These filamentous pili are attached to the cell surface; they mediate biofilm formation, adhesion onto host cells and onto other bacteria that are part of the oral microbiome. They play an important role in invasion of periodontal tissues and are recognized as major virulence factors. This is Minor fimbrium tip subunit MfA4 from Porphyromonas gingivalis (strain ATCC 33277 / DSM 20709 / CIP 103683 / JCM 12257 / NCTC 11834 / 2561).